A 287-amino-acid polypeptide reads, in one-letter code: Putative inactive carboxylesterase 4 (287 aa).

Residues 1-18 form the signal peptide; that stretch reads MWLPALVLATLAASAAWA. An N-linked (GlcNAc...) asparagine glycan is attached at asparagine 80.

Belongs to the type-B carboxylesterase/lipase family. Expressed in placenta.

The protein localises to the secreted. Has no esterase activity. This Homo sapiens (Human) protein is Putative inactive carboxylesterase 4 (CES1P1).